A 521-amino-acid chain; its full sequence is Probable methylmalonate-semialdehyde/malonate-semialdehyde dehydrogenase [acylating], mitochondrial (521 aa).

Residues Ala-170, Phe-172, Lys-196, Glu-199, Arg-200, and Ser-249 each contribute to the NAD(+) site. The Nucleophile role is filled by Cys-304. An NAD(+)-binding site is contributed by Glu-404.

This sequence belongs to the aldehyde dehydrogenase family. Homotetramer.

The protein resides in the mitochondrion. It carries out the reaction 2-methyl-3-oxopropanoate + NAD(+) + CoA + H2O = propanoyl-CoA + hydrogencarbonate + NADH + H(+). The catalysed reaction is 3-oxopropanoate + NAD(+) + CoA + H2O = hydrogencarbonate + acetyl-CoA + NADH + H(+). Its function is as follows. Probable malonate and methylmalonate semialdehyde dehydrogenase involved in the catabolism of valine, thymine, and compounds catabolized by way of beta-alanine, including uracil and cytidine. This is Probable methylmalonate-semialdehyde/malonate-semialdehyde dehydrogenase [acylating], mitochondrial from Anopheles gambiae (African malaria mosquito).